The primary structure comprises 318 residues: Non-homologous end joining protein Ku (318 aa).

The region spanning 10 to 193 (AFGLVNVPVK…EVQIKPAELK (184 aa)) is the Ku domain. Residues 259 to 318 (SVKARKGGKSDSKDDSDSESDSKESKSDSKPAKKAPAKKAAAKKSTAKKAPAKKAAAKKS) are disordered. Residues 266–289 (GKSDSKDDSDSESDSKESKSDSKP) are compositionally biased toward basic and acidic residues. Basic residues predominate over residues 290–318 (AKKAPAKKAAAKKSTAKKAPAKKAAAKKS).

It belongs to the prokaryotic Ku family. As to quaternary structure, homodimer. Interacts with Sir2 and probably also with LigD; may form a trimeric complex during NHEJ.

In terms of biological role, with LigD forms a non-homologous end joining (NHEJ) repair enzyme which repairs blunt-end and 5'-overhang double strand breaks (DSB) with about 50% fidelity, and DSB with non-complementary 3' ends. Plays a partial role in NHEJ on 3'-overhang repair of complementary ends. NHEJ repairs DSB with blunt ends and 5' overhangs with a high level of nucleotide insertion/deletion, without a need for microhomology. This protein but not LigD also suppresses homologous recombination. Overexpression dramatically increases the efficiency of NHEJ with no effect on repair fidelity. This is Non-homologous end joining protein Ku from Mycolicibacterium smegmatis (strain ATCC 700084 / mc(2)155) (Mycobacterium smegmatis).